The primary structure comprises 635 residues: Moesin/ezrin/radixin homolog 2 (635 aa).

In terms of domain architecture, FERM spans 12–305 (LSVRVSTFDS…GNHDLYMRRR (294 aa)).

As to quaternary structure, interacts with Moe and arm at the adherens junction. Forms a complex with Kibra and Ex. Interacts (via FERM domain) with Sav (via FBM motif). Interacts with Schip1. In terms of tissue distribution, expressed predominantly in the germline. Expressed in the developing oocyte from stage 6 to the end of oogenesis and in the apical ends of follical cells from stage 10. Ubiquitous expression throughout embryogenesis with enhanced expression in mesoderm of early embryos and midgut of late embryos. In embryonic CNS, expression is seen in neuropil and developing brain and is enhanced in neuronal cell bodies. In embryonic PNS, expression is seen within the cell body. In third instar larvae, expression is uniform in the eye imaginal disk and is enhanced at the morphogenetic furrow. In pupal eyes, expression is seen in the cytoplasm of secondary and tertiary pigment cells, bristle precursor cells and rhabdomeres.

The protein resides in the cell junction. The protein localises to the adherens junction. It is found in the cell membrane. Its subcellular location is the cytoplasm. It localises to the cytoskeleton. The protein resides in the apical cell membrane. The protein localises to the cell projection. It is found in the rhabdomere. Functionally, regulator of the Hippo/SWH (Sav/Wts/Hpo) signaling pathway, a signaling pathway that plays a pivotal role in organ size control and tumor suppression by restricting proliferation and promoting apoptosis. The core of this pathway is composed of a kinase cascade wherein Hippo (Hpo), in complex with its regulatory protein Salvador (Sav), phosphorylates and activates Warts (Wts) in complex with its regulatory protein Mats, which in turn phosphorylates and inactivates the Yorkie (Yki) oncoprotein. Mer acts synergistically along with Ex and Kibra to regulate the Hippo signaling pathway. This is Moesin/ezrin/radixin homolog 2 (Mer) from Drosophila melanogaster (Fruit fly).